The sequence spans 124 residues: MAITKDDILEAVGAMSVMELNDLVKAFEEKFGVSAAAMAVAAAPGAAGAAAAEEQTEFNVILAEVGANKVGVIKAVREITGLGLKEAKDLVDGAPKPVKEGVDKAAAAEAKKKLEDAGAKVDVK.

It belongs to the bacterial ribosomal protein bL12 family. As to quaternary structure, homodimer. Part of the ribosomal stalk of the 50S ribosomal subunit. Forms a multimeric L10(L12)X complex, where L10 forms an elongated spine to which 2 to 4 L12 dimers bind in a sequential fashion. Binds GTP-bound translation factors.

Forms part of the ribosomal stalk which helps the ribosome interact with GTP-bound translation factors. Is thus essential for accurate translation. This is Large ribosomal subunit protein bL12 from Cupriavidus taiwanensis (strain DSM 17343 / BCRC 17206 / CCUG 44338 / CIP 107171 / LMG 19424 / R1) (Ralstonia taiwanensis (strain LMG 19424)).